We begin with the raw amino-acid sequence, 162 residues long: NADH-quinone oxidoreductase subunit I (162 aa).

2 4Fe-4S ferredoxin-type domains span residues 52–82 and 93–122; these read LRRY…IEAG and TRYD…EGPN. Positions 62, 65, 68, 72, 102, 105, 108, and 112 each coordinate [4Fe-4S] cluster.

The protein belongs to the complex I 23 kDa subunit family. As to quaternary structure, NDH-1 is composed of 14 different subunits. Subunits NuoA, H, J, K, L, M, N constitute the membrane sector of the complex. [4Fe-4S] cluster is required as a cofactor.

It localises to the cell inner membrane. It catalyses the reaction a quinone + NADH + 5 H(+)(in) = a quinol + NAD(+) + 4 H(+)(out). Its function is as follows. NDH-1 shuttles electrons from NADH, via FMN and iron-sulfur (Fe-S) centers, to quinones in the respiratory chain. The immediate electron acceptor for the enzyme in this species is believed to be ubiquinone. Couples the redox reaction to proton translocation (for every two electrons transferred, four hydrogen ions are translocated across the cytoplasmic membrane), and thus conserves the redox energy in a proton gradient. The polypeptide is NADH-quinone oxidoreductase subunit I (Methylocella silvestris (strain DSM 15510 / CIP 108128 / LMG 27833 / NCIMB 13906 / BL2)).